A 201-amino-acid chain; its full sequence is Small ribosomal subunit protein uS4c (201 aa).

A disordered region spans residues 15-43 (LGALPGLTSKRPRSGSDLRNQSRSGKRSQ). Residues 89 to 150 (MRLDNILFRL…KERSRALIQN (62 aa)) enclose the S4 RNA-binding domain.

It belongs to the universal ribosomal protein uS4 family. Part of the 30S ribosomal subunit. Contacts protein S5. The interaction surface between S4 and S5 is involved in control of translational fidelity.

It localises to the plastid. The protein localises to the chloroplast. Its function is as follows. One of the primary rRNA binding proteins, it binds directly to 16S rRNA where it nucleates assembly of the body of the 30S subunit. Functionally, with S5 and S12 plays an important role in translational accuracy. The protein is Small ribosomal subunit protein uS4c (rps4) of Amborella trichopoda.